The primary structure comprises 491 residues: COP9 signalosome complex subunit 1 (491 aa).

Residues 269–431 (CLLLASFDHC…KILYARDVDQ (163 aa)) form the PCI domain. A disordered region spans residues 465 to 491 (HVKSPPREGSQGELTPANSQSRMSTNM). A phosphoserine mark is found at S468 and S474. A compositionally biased stretch (polar residues) spans 476–491 (GELTPANSQSRMSTNM). T479 carries the post-translational modification Phosphothreonine. At S483 the chain carries Phosphoserine.

This sequence belongs to the CSN1 family. As to quaternary structure, component of the CSN complex, composed of COPS1/GPS1, COPS2, COPS3, COPS4, COPS5, COPS6, COPS7 (COPS7A or COPS7B), COPS8 and COPS9 isoform 1. In the complex, it probably interacts directly with COPS2, COPS3, COPS4 and COPS5. Interacts directly with inositol kinase ITPK1. Interacts with CAPN8. Interacts with USP48. Interacts with ASB4; this interaction negatively regulates GPS1. Widely expressed.

It localises to the cytoplasm. The protein localises to the nucleus. In terms of biological role, essential component of the COP9 signalosome complex (CSN), a complex involved in various cellular and developmental processes. The CSN complex is an essential regulator of the ubiquitin (Ubl) conjugation pathway by mediating the deneddylation of the cullin subunits of SCF-type E3 ligase complexes, leading to decrease the Ubl ligase activity of SCF-type complexes such as SCF, CSA or DDB2. The complex is also involved in phosphorylation of p53/TP53, c-jun/JUN, IkappaBalpha/NFKBIA, ITPK1 and IRF8/ICSBP, possibly via its association with CK2 and PKD kinases. CSN-dependent phosphorylation of TP53 and JUN promotes and protects degradation by the Ubl system, respectively. Suppresses G-protein- and mitogen-activated protein kinase-mediated signal transduction. This Homo sapiens (Human) protein is COP9 signalosome complex subunit 1 (GPS1).